The chain runs to 1121 residues: uncharacterized protein (1121 aa).

The tract at residues 179–198 (GPGECQSVHNQSSGSGSNSY) is disordered. N-linked (GlcNAc...) asparagine; by host glycosylation is found at Asn-188, Asn-325, Asn-351, Asn-449, Asn-561, and Asn-615. Disordered stretches follow at residues 649-684 (KRIH…RIHN) and 701-734 (STRQ…TDSD). The segment covering 701–715 (STRQDASGGSSSGTK) has biased composition (polar residues). N-linked (GlcNAc...) asparagine; by host glycans are attached at residues Asn-838, Asn-911, Asn-914, and Asn-980.

The protein belongs to the herpesviridae US22 family.

This is an uncharacterized protein from Homo sapiens (Human).